The primary structure comprises 293 residues: Protein boule-like (293 aa).

Polar residues predominate over residues 1 to 16; it reads METESRAQSTNQTQTD. The disordered stretch occupies residues 1–39; it reads METESRAQSTNQTQTDSLSPSPNPVSPVPLNNPTSGPRY. Residues S19, S21, and S26 each carry the phosphoserine modification. The region spanning 45 to 122 is the RRM domain; sequence NRIFVGGIDF…KKLNIGPAIR (78 aa). A DAZ domain is found at 172-196; that stretch reads PSRSISSSPVMVAQPVYQQPAYHYQ.

Belongs to the RRM DAZ family. As to quaternary structure, interacts with DAZ1 and DAZL. As to expression, testis specific. Not expressed in early embryos, primoridal germ cells and spermatogonial cells. First expressed in the cytoplasm of spermatocytes and then persists through meiosis.

The protein resides in the cytoplasm. Functionally, probable RNA-binding protein, which may be required during spermatogenesis. May act by binding to the 3'-UTR of mRNAs and regulating their translation. In Mus musculus (Mouse), this protein is Protein boule-like.